The following is a 472-amino-acid chain: RNA pseudouridine synthase 6, chloroplastic (472 aa).

The N-terminal 66 residues, 1–66 (MASPALTGGY…TDSQNQTTLS (66 aa)), are a transit peptide targeting the chloroplast. The region spanning 101–208 (VLVSEFISKQ…SPRCYEIDWK (108 aa)) is the S4 RNA-binding domain. Asp-261 is an active-site residue.

Belongs to the pseudouridine synthase RluA family.

The protein resides in the plastid. The protein localises to the chloroplast. The catalysed reaction is a uridine in RNA = a pseudouridine in RNA. This is RNA pseudouridine synthase 6, chloroplastic from Arabidopsis thaliana (Mouse-ear cress).